An 887-amino-acid chain; its full sequence is MIKHNLVSDLRRLFIDFFVKNGHQFFPSSQLVIKDDPSLLFTNAGMVQFKQRFTSVDDRSINTAVSSQKCLRVGGKHNDLENVGHTNRHHTFFEMLGNFSFGSYFKERAIELAWDFVTKELALDKKRLYITVYHDDQDAFNLWKKISSFSDDKIIKIKTNDNFWSMGNVGPCGPCSEIFYDYGESVKGGLPGTPEEDGARFTEIWNLVFMEYNRTEEGELSVLPRKCIDTGMGLERIAAVMQGVHDNYDINLFKALIAMSKKESGNSSCEIAHRVIADHVRSAAFLIAEGLTPGNEGRDYILRRIIRRAARYVYMLKYTDSLMYKIFPVLIDETSNAYMADYYPELFKAKDLIISILKTEEENFKDTLVRALPLLEKELTYLSTGDVLSGDIIFRLYDTYGFPVDITLDIIKERGIRFDEKGFYDNMEQQKTRSRLSHLIKSTEQLNGKIWEDIRQNYNNTRFVGYDNFQVQSKILSMVMNNDRNVTVANVGDKVSILMDITPFYAEAGGQQADTGLLSVVRRDGKDLFGSSNIADVTNTKNIFDGLYIHECIVKSGSLIIGDIVSAEINSHRRKDLCANHSATHLLHYILRMEIDNNIMQKGSLVGNDKLRFDFSYNMALTEKQIKLIENRMCDLIRQNHPVETNICNLQNAMDNGAIALFTEKYDNHEVRVVNIGNSKELCCGTHVKYTGEIGCFKIISESSIACGIRRIEAVTGQYAIDYFRQQEKVLYQVAESVKSPVEDVLVQIDKINRENQELKQKLWAAYFDIIDMQGVNIEKIGNINFLHGTLSSVPIDVVRKFIMKRLVKDMIMLFSNVVNHNKIYVVGVGNSLHSKVKAADFVKIIGCVVKSKGGGNAQLAQISTEYIAEVDVIQHIKDELVSIFNA.

The Zn(2+) site is built by His-581, His-585, Cys-683, and His-687.

This sequence belongs to the class-II aminoacyl-tRNA synthetase family. Zn(2+) is required as a cofactor.

It is found in the cytoplasm. It carries out the reaction tRNA(Ala) + L-alanine + ATP = L-alanyl-tRNA(Ala) + AMP + diphosphate. In terms of biological role, catalyzes the attachment of alanine to tRNA(Ala) in a two-step reaction: alanine is first activated by ATP to form Ala-AMP and then transferred to the acceptor end of tRNA(Ala). Also edits incorrectly charged Ser-tRNA(Ala) and Gly-tRNA(Ala) via its editing domain. The sequence is that of Alanine--tRNA ligase from Ehrlichia ruminantium (strain Welgevonden).